A 243-amino-acid chain; its full sequence is Voltage-gated monoatomic cation channel TMEM109 (243 aa).

An N-terminal signal peptide occupies residues 1-33 (MAGAHSNPSWSRHLFKAVLMVLGALLLVHSASA). At 34 to 83 (QTHREFASPGQQKRESSADILTEIGRSLKETLDTWLGPETMHVISETLLQ) the chain is on the lumenal side. A helical membrane pass occupies residues 84–104 (VMWAISSAISVACFALSGIAA). The Cytoplasmic segment spans residues 105 to 135 (QLLSALGLDGEQLTQVLKLSPSQVQTLLLWG). The chain crosses the membrane as a helical span at residues 136-156 (AAALVIYWLLSLLLGLVLALL). At 157–185 (GRILGGLKLVLFVAGFVGLVRSVPDPSTR) the chain is on the lumenal side. The chain crosses the membrane as a helical span at residues 186–205 (ALLLLALLTVFALLSRLTGS). At 206–243 (RSSGTHLEAKVRGLERQIEELRGRQRRAAKIPRSMEEE) the chain is on the cytoplasmic side.

In terms of assembly, homooligomer. Interacts with CRYAB; in the cellular response to DNA damage.

Its subcellular location is the nucleus outer membrane. It is found in the endoplasmic reticulum membrane. The protein resides in the sarcoplasmic reticulum membrane. The enzyme catalyses K(+)(in) = K(+)(out). It carries out the reaction Ca(2+)(in) = Ca(2+)(out). Functions as a voltage-gated monoatomic cation channel permeable to both potassium and calcium. Plays a role in the cellular response to DNA damage. The chain is Voltage-gated monoatomic cation channel TMEM109 from Rattus norvegicus (Rat).